Here is a 175-residue protein sequence, read N- to C-terminus: Inorganic pyrophosphatase (175 aa).

Substrate-binding residues include K30, R44, and Y56. Positions 66, 71, and 103 each coordinate Mg(2+). Y140 contacts substrate.

Belongs to the PPase family. Homohexamer. Mg(2+) serves as cofactor.

The protein localises to the cytoplasm. It catalyses the reaction diphosphate + H2O = 2 phosphate + H(+). Functionally, catalyzes the hydrolysis of inorganic pyrophosphate (PPi) forming two phosphate ions. This Thermus thermophilus (strain ATCC 27634 / DSM 579 / HB8) protein is Inorganic pyrophosphatase.